The following is a 435-amino-acid chain: Trigger factor (435 aa).

Positions 164–249 (GDFAKFDFEG…LHEIQGKKAG (86 aa)) constitute a PPIase FKBP-type domain.

This sequence belongs to the FKBP-type PPIase family. Tig subfamily.

Its subcellular location is the cytoplasm. It catalyses the reaction [protein]-peptidylproline (omega=180) = [protein]-peptidylproline (omega=0). Involved in protein export. Acts as a chaperone by maintaining the newly synthesized protein in an open conformation. Functions as a peptidyl-prolyl cis-trans isomerase. This Campylobacter fetus subsp. fetus (strain 82-40) protein is Trigger factor.